The primary structure comprises 32 residues: Tail virion protein G7P (32 aa).

Residues 9-29 traverse the membrane as a helical segment; it reads LYQLIFNAGLVICFGLGVISG.

The protein belongs to the inovirus G7P protein family.

Its subcellular location is the virion. It localises to the host membrane. Its function is as follows. May initiate with G9P the virion concomitant assembly-budding process, by interacting with the packaging signal of the viral genome. The assembly-budding takes place at the host inner membrane. In turn, G7P and G9P are present at the end of the filamentous virion that emerges first from the bacterial host. In Escherichia phage If1 (Bacteriophage If1), this protein is Tail virion protein G7P (VII).